Reading from the N-terminus, the 393-residue chain is Staphopain B (393 aa).

Residues 1–36 form the signal peptide; sequence MNSSCKTRVFNIISIIMVSMLILSLGAFANNNKAKA. Residues 37 to 219 constitute a propeptide that is removed on maturation; that stretch reads DSHSKQLEIN…KVEENEAIQE (183 aa). Residues Cys243, His340, and Asn360 contribute to the active site.

The protein belongs to the peptidase C47 family. In terms of assembly, in the cytoplasm, prematurely activated/folded SspB forms a stable non-covalent complex with SspC. In terms of processing, proteolytically cleaved by staphylococcal serine protease (SspA).

The protein resides in the secreted. With respect to regulation, prematurely activated/folded staphopain B is inhibited by staphostatin B (SspC), which is probably required to protect staphylococcal cytoplasmic proteins from degradation by SspB. In terms of biological role, cysteine protease that plays an important role in the inhibition of host innate immune response. Degrades host elastin, fibrogen, fibronectin and kininogen. Blocks phagocytosis of opsonised S.aureus by neutrophils and monocytes by inducing their death in a proteolytic activity-dependent manner. Decreases surface expression of the 'don't eat me' signal CD31 on neutrophils. Cleaves host galectin-3/LGALS3, thereby inhibiting the neutrophil-activating ability of the lectin. The sequence is that of Staphopain B (sspB) from Staphylococcus aureus.